The chain runs to 297 residues: Small ribosomal subunit biogenesis GTPase RsgA (297 aa).

The 159-residue stretch at 65–223 folds into the CP-type G domain; that stretch reads RNELVRPPVA…VADTPGFSAI (159 aa). Residues 114 to 117 and 166 to 174 each bind GTP; these read TKVD and GQSGAGKST. Zn(2+) contacts are provided by Cys-247, Cys-252, His-254, and Cys-260.

It belongs to the TRAFAC class YlqF/YawG GTPase family. RsgA subfamily. As to quaternary structure, monomer. Associates with 30S ribosomal subunit, binds 16S rRNA. Zn(2+) is required as a cofactor.

Its subcellular location is the cytoplasm. Its function is as follows. One of several proteins that assist in the late maturation steps of the functional core of the 30S ribosomal subunit. Helps release RbfA from mature subunits. May play a role in the assembly of ribosomal proteins into the subunit. Circularly permuted GTPase that catalyzes slow GTP hydrolysis, GTPase activity is stimulated by the 30S ribosomal subunit. This is Small ribosomal subunit biogenesis GTPase RsgA from Enterococcus faecalis (strain ATCC 700802 / V583).